The chain runs to 204 residues: uncharacterized protein (204 aa).

The protein localises to the mitochondrion. This is an uncharacterized protein from Arabidopsis thaliana (Mouse-ear cress).